The following is a 157-amino-acid chain: 2-C-methyl-D-erythritol 2,4-cyclodiphosphate synthase (157 aa).

A divalent metal cation is bound by residues Asp-8 and His-10. Residues 8–10 (DVH) and 34–35 (HS) contribute to the 4-CDP-2-C-methyl-D-erythritol 2-phosphate site. An a divalent metal cation-binding site is contributed by His-42. 4-CDP-2-C-methyl-D-erythritol 2-phosphate is bound by residues 56–58 (DIG), 61–65 (FPDTD), 100–106 (AQAPKMA), 132–135 (TTEE), Phe-139, and Arg-142.

This sequence belongs to the IspF family. Homotrimer. It depends on a divalent metal cation as a cofactor.

The catalysed reaction is 4-CDP-2-C-methyl-D-erythritol 2-phosphate = 2-C-methyl-D-erythritol 2,4-cyclic diphosphate + CMP. It functions in the pathway isoprenoid biosynthesis; isopentenyl diphosphate biosynthesis via DXP pathway; isopentenyl diphosphate from 1-deoxy-D-xylulose 5-phosphate: step 4/6. Functionally, involved in the biosynthesis of isopentenyl diphosphate (IPP) and dimethylallyl diphosphate (DMAPP), two major building blocks of isoprenoid compounds. Catalyzes the conversion of 4-diphosphocytidyl-2-C-methyl-D-erythritol 2-phosphate (CDP-ME2P) to 2-C-methyl-D-erythritol 2,4-cyclodiphosphate (ME-CPP) with a corresponding release of cytidine 5-monophosphate (CMP). The sequence is that of 2-C-methyl-D-erythritol 2,4-cyclodiphosphate synthase from Pseudomonas entomophila (strain L48).